Consider the following 359-residue polypeptide: Fructose-bisphosphate aldolase (359 aa).

Residue Ser-50 participates in D-glyceraldehyde 3-phosphate binding. Asp-83 serves as the catalytic Proton donor. The Zn(2+) site is built by His-84, Asp-105, Glu-142, and His-198. Gly-199 is a binding site for dihydroxyacetone phosphate. His-232 lines the Zn(2+) pocket. Dihydroxyacetone phosphate is bound by residues 233-235 and 275-278; these read GSS and NIDT.

Zn(2+) is required as a cofactor.

The enzyme catalyses beta-D-fructose 1,6-bisphosphate = D-glyceraldehyde 3-phosphate + dihydroxyacetone phosphate. It functions in the pathway carbohydrate degradation; glycolysis; D-glyceraldehyde 3-phosphate and glycerone phosphate from D-glucose: step 4/4. Functionally, catalyzes the aldol condensation of dihydroxyacetone phosphate (DHAP or glycerone-phosphate) with glyceraldehyde 3-phosphate (G3P) to form fructose 1,6-bisphosphate (FBP) in gluconeogenesis and the reverse reaction in glycolysis. The sequence is that of Fructose-bisphosphate aldolase from Nostoc sp. (strain PCC 7120 / SAG 25.82 / UTEX 2576).